Consider the following 640-residue polypeptide: Threonine--tRNA ligase (640 aa).

In terms of domain architecture, TGS spans 1 to 61 (MPTITLPDGS…THDATLQIIT (61 aa)). The tract at residues 242–533 (DHRKIGKQLD…LIEHYAGVFP (292 aa)) is catalytic. 3 residues coordinate Zn(2+): Cys333, His384, and His510.

This sequence belongs to the class-II aminoacyl-tRNA synthetase family. As to quaternary structure, homodimer. The cofactor is Zn(2+).

It is found in the cytoplasm. The catalysed reaction is tRNA(Thr) + L-threonine + ATP = L-threonyl-tRNA(Thr) + AMP + diphosphate + H(+). Its function is as follows. Catalyzes the attachment of threonine to tRNA(Thr) in a two-step reaction: L-threonine is first activated by ATP to form Thr-AMP and then transferred to the acceptor end of tRNA(Thr). Also edits incorrectly charged L-seryl-tRNA(Thr). The protein is Threonine--tRNA ligase of Pseudomonas putida (strain W619).